The following is a 540-amino-acid chain: Cytokinin dehydrogenase 5 (540 aa).

Residues 1–22 form the signal peptide; that stretch reads MNREMTSSFLLLTFAICKLIIA. Residues 63–241 form the FAD-binding PCMH-type domain; sequence SPEEPLAVLH…TRARISLEPA (179 aa). 3 residues coordinate FAD: A97, G99, and G101. A Pros-8alpha-FAD histidine modification is found at H102. FAD contacts are provided by S103, Q107, D165, T170, S176, I180, and I231. 2 N-linked (GlcNAc...) asparagine glycosylation sites follow: N310 and N406. FAD-binding residues include Y479 and Q517.

It belongs to the oxygen-dependent FAD-linked oxidoreductase family. FAD is required as a cofactor. Expressed in the developing leaf petioles and in the rib zone of the axillary shoot meristems. In roots, expressed in the vascular cylinder within the root apical meristem and only faintly detectable in the differentiated root.

It localises to the secreted. It is found in the extracellular space. It carries out the reaction N(6)-dimethylallyladenine + A + H2O = 3-methyl-2-butenal + adenine + AH2. Its function is as follows. Catalyzes the oxidation of cytokinins, a family of N(6)-substituted adenine derivatives that are plant hormones, where the substituent is an isopentenyl group. In association with CKX3 regulates the activity of the reproductive meristems, flower organ size and ovule formation. The chain is Cytokinin dehydrogenase 5 (CKX5) from Arabidopsis thaliana (Mouse-ear cress).